Reading from the N-terminus, the 473-residue chain is PPE family protein PPE37 (473 aa).

Residues 203–206 carry the Iron-binding motif motif; the sequence is DFLE. The next 2 membrane-spanning stretches (helical) occupy residues 227–247 and 250–270; these read VLDW…AYLV and PLIY…PAGL.

This sequence belongs to the mycobacterial PPE family.

It localises to the cell membrane. Essential for efficient heme-iron acquisition (HIA). Binds iron. Strains with a functional PPE37 can utilize low concentrations of hemin very efficiently in broth and on agar plates. During infection, might interfere with the pro-inflammatory cytokine response in infected macrophages. Its function is as follows. In vitro, incubation of the protein in the presence of M.tuberculosis proteases leads to the cleavage of PPE37 into two segments, the N- and C-terminal segments. Transfection of human monocytic THP-1 cell lines with the N-terminal segment leads to the proliferation and differentiation of THP-1 cells into adherent stellate cells with dendritic cell-like morphology. Transfection of THP-1 cells with the C-terminal segment leads to the apoptosis of the cells. Recombinant protein antigens display strong B-cell response in tuberculosis patients and immunized mice. In Mycobacterium tuberculosis (strain ATCC 25618 / H37Rv), this protein is PPE family protein PPE37.